The chain runs to 178 residues: Interleukin-10 (178 aa).

The N-terminal stretch at 1–18 (MHSSALLCCLVLLTGVRA) is a signal peptide. 2 disulfide bridges follow: C30/C126 and C80/C132. A glycan (N-linked (GlcNAc...) asparagine) is linked at N134.

Belongs to the IL-10 family. Homodimer. Interacts with IL10RA and IL10RB.

The protein resides in the secreted. Functionally, major immune regulatory cytokine that acts on many cells of the immune system where it has profound anti-inflammatory functions, limiting excessive tissue disruption caused by inflammation. Mechanistically, IL10 binds to its heterotetrameric receptor comprising IL10RA and IL10RB leading to JAK1 and STAT2-mediated phosphorylation of STAT3. In turn, STAT3 translocates to the nucleus where it drives expression of anti-inflammatory mediators. Targets antigen-presenting cells (APCs) such as macrophages and monocytes and inhibits their release of pro-inflammatory cytokines including granulocyte-macrophage colony-stimulating factor /GM-CSF, granulocyte colony-stimulating factor/G-CSF, IL-1 alpha, IL-1 beta, IL-6, IL-8 and TNF-alpha. Also interferes with antigen presentation by reducing the expression of MHC-class II and co-stimulatory molecules, thereby inhibiting their ability to induce T cell activation. In addition, controls the inflammatory response of macrophages by reprogramming essential metabolic pathways including mTOR signaling. This is Interleukin-10 (IL10) from Pan troglodytes (Chimpanzee).